The chain runs to 233 residues: Ribonuclease 3 (233 aa).

The RNase III domain maps to 9–136 (LQHFWEQFHL…IIGSVYLSGG (128 aa)). Glutamate 49 serves as a coordination point for Mg(2+). Aspartate 53 is an active-site residue. Aspartate 122 and glutamate 125 together coordinate Mg(2+). Glutamate 125 is an active-site residue. A DRBM domain is found at 162 to 231 (DSKSALQEFV…ARAALALLKV (70 aa)).

It belongs to the ribonuclease III family. Homodimer. The cofactor is Mg(2+).

It localises to the cytoplasm. It catalyses the reaction Endonucleolytic cleavage to 5'-phosphomonoester.. Digests double-stranded RNA. Involved in the processing of primary rRNA transcript to yield the immediate precursors to the large and small rRNAs (23S and 16S). Processes some mRNAs, and tRNAs when they are encoded in the rRNA operon. Processes pre-crRNA and tracrRNA of type II CRISPR loci if present in the organism. This is Ribonuclease 3 from Moorella thermoacetica (strain ATCC 39073 / JCM 9320).